A 119-amino-acid chain; its full sequence is Dolichyl-diphosphooligosaccharide--protein glycosyltransferase subunit DAD1 (119 aa).

Ser2 is modified (N-acetylserine). Residues 2–30 (SASVASVISRFLEEYLSSTPQRLKLLDAY) lie on the Cytoplasmic side of the membrane. The chain crosses the membrane as a helical span at residues 31–51 (LLYILLTGALQFGYCLLVGTF). Residues 52 to 54 (PFN) are Lumenal-facing. A helical membrane pass occupies residues 55-75 (SFLSGFISCVGSFILAGNGSL). Over 76-81 (RNRSNN) the chain is Cytoplasmic. The chain crosses the membrane as a helical span at residues 82–98 (VFTLVRCFSSLVTLFYS). Over 99–119 (RSPPREVPRGACIALFCERGN) the chain is Lumenal.

This sequence belongs to the DAD/OST2 family. In terms of assembly, component of the oligosaccharyltransferase (OST) complex. OST exists in two different complex forms which contain common core subunits RPN1, RPN2, OST48, OST4, DAD1 and TMEM258, either STT3A or STT3B as catalytic subunits, and form-specific accessory subunits. STT3A complex assembly occurs through the formation of 3 subcomplexes. Subcomplex 1 contains RPN1 and TMEM258, subcomplex 2 contains the STT3A-specific subunits STT3A, DC2/OSTC, and KCP2 as well as the core subunit OST4, and subcomplex 3 contains RPN2, DAD1, and OST48. The STT3A complex can form stable complexes with the Sec61 complex or with both the Sec61 and TRAP complexes.

The protein localises to the endoplasmic reticulum membrane. It participates in protein modification; protein glycosylation. Subunit of the oligosaccharyl transferase (OST) complex that catalyzes the initial transfer of a defined glycan (Glc(3)Man(9)GlcNAc(2) in eukaryotes) from the lipid carrier dolichol-pyrophosphate to an asparagine residue within an Asn-X-Ser/Thr consensus motif in nascent polypeptide chains, the first step in protein N-glycosylation. N-glycosylation occurs cotranslationally and the complex associates with the Sec61 complex at the channel-forming translocon complex that mediates protein translocation across the endoplasmic reticulum (ER). All subunits are required for a maximal enzyme activity. This chain is Dolichyl-diphosphooligosaccharide--protein glycosyltransferase subunit DAD1, found in Canis lupus familiaris (Dog).